The primary structure comprises 210 residues: MSLGLVGRKCGMTRIFTEDGVSIPVTVVQVEPNKVTQVKTVEKDGYNAIQVTTGFKKRSNVNKPMAGHYAKASVEPGRGLWEFTVDAAAEYQVGSSFDATMFEAGQKVDVRGVSKGKGFQGGVKRHNFATQDATHGNSLSHRVHGSTGQNQTPGRVFKNKKMAGHLGNENVTIQSLEVVRVDAENGLLLLKGGIPGSVGGDIIVTPAVKS.

The tract at residues 133–152 is disordered; that stretch reads ATHGNSLSHRVHGSTGQNQT. N5-methylglutamine is present on Gln-151.

Belongs to the universal ribosomal protein uL3 family. As to quaternary structure, part of the 50S ribosomal subunit. Forms a cluster with proteins L14 and L19. Post-translationally, methylated by PrmB.

One of the primary rRNA binding proteins, it binds directly near the 3'-end of the 23S rRNA, where it nucleates assembly of the 50S subunit. The sequence is that of Large ribosomal subunit protein uL3 from Francisella tularensis subsp. holarctica (strain FTNF002-00 / FTA).